Reading from the N-terminus, the 441-residue chain is Ribulose bisphosphate carboxylase large chain (441 aa).

Lysine 5 carries the N6,N6,N6-trimethyllysine modification. Asparagine 114 and threonine 164 together coordinate substrate. Lysine 166 serves as the catalytic Proton acceptor. Lysine 168 is a binding site for substrate. Residues lysine 192, aspartate 194, and glutamate 195 each contribute to the Mg(2+) site. Lysine 192 carries the post-translational modification N6-carboxylysine. Histidine 285 functions as the Proton acceptor in the catalytic mechanism. 3 residues coordinate substrate: arginine 286, histidine 318, and serine 370.

It belongs to the RuBisCO large chain family. Type I subfamily. In terms of assembly, heterohexadecamer of 8 large chains and 8 small chains; disulfide-linked. The disulfide link is formed within the large subunit homodimers. It depends on Mg(2+) as a cofactor. In terms of processing, the disulfide bond which can form in the large chain dimeric partners within the hexadecamer appears to be associated with oxidative stress and protein turnover.

The protein localises to the plastid. Its subcellular location is the chloroplast. The enzyme catalyses 2 (2R)-3-phosphoglycerate + 2 H(+) = D-ribulose 1,5-bisphosphate + CO2 + H2O. It catalyses the reaction D-ribulose 1,5-bisphosphate + O2 = 2-phosphoglycolate + (2R)-3-phosphoglycerate + 2 H(+). Functionally, ruBisCO catalyzes two reactions: the carboxylation of D-ribulose 1,5-bisphosphate, the primary event in carbon dioxide fixation, as well as the oxidative fragmentation of the pentose substrate in the photorespiration process. Both reactions occur simultaneously and in competition at the same active site. In Begonia metallica x Begonia sanguinea, this protein is Ribulose bisphosphate carboxylase large chain.